We begin with the raw amino-acid sequence, 187 residues long: UPF0301 protein ESA_00394 (187 aa).

This sequence belongs to the UPF0301 (AlgH) family.

This chain is UPF0301 protein ESA_00394, found in Cronobacter sakazakii (strain ATCC BAA-894) (Enterobacter sakazakii).